The primary structure comprises 183 residues: Caltractin ICL1c (183 aa).

The tract at residues 1-30 (MARRGQQPPPQQQQAPPTQKNQAGKFNPAE) is disordered. 4 consecutive EF-hand domains span residues 39–74 (EEVL…LGFE), 75–110 (AKNQ…RISE), 112–147 (DSKA…LGET), and 148–183 (MDDS…KTFA). Ca(2+) contacts are provided by Asp-52, Asp-54, Thr-56, Ser-58, Glu-63, Asp-88, Asp-90, Ser-92, Gln-94, and Glu-99.

It belongs to the centrin family. In terms of assembly, monomer.

The protein localises to the cytoplasm. The protein resides in the cytoskeleton. Its function is as follows. Plays a fundamental role in microtubule organizing center structure and function. Component of the infraciliary lattice (ICL) and the ciliary basal bodies. In Paramecium tetraurelia, this protein is Caltractin ICL1c (Icl1c).